A 231-amino-acid polypeptide reads, in one-letter code: MTVLTDKIAVVTGAGSGIGEAIATLLHEEGAKVVLAGRNKDKLQNVANQLAQDSVKVVPTDVTKKEEVDELIKMAQQTFGGLDIVINSAGQMLSSKITDYQVDEWDSMIDVNIKGTLYTAKAALPTMLEQSSGHLINIASISGFEVTKSSTIYSATKAAVHTITQGLEKELAKTGVKVTSISPGMVDTAITATYNPTDRKKLEPQDIAEAVLYALTQPKHVNVNEITVRPV.

10 to 34 contacts NADP(+); the sequence is VVTGAGSGIGEAIATLLHEEGAKVV. S140 provides a ligand contact to substrate. Y153 serves as the catalytic Proton acceptor.

This sequence belongs to the short-chain dehydrogenases/reductases (SDR) family.

This is an uncharacterized protein from Staphylococcus aureus (strain MRSA252).